The following is a 1148-amino-acid chain: Envelopment polyprotein (1148 aa).

A signal peptide spans 1–23 (MGKSSPVCLYLILQGLLLFDTVN). The Lumenal portion of the chain corresponds to 24–496 (AKNLNELKME…PGLHGWATVL (473 aa)). 6 cysteine pairs are disulfide-bonded: cysteine 34/cysteine 159, cysteine 68/cysteine 165, cysteine 117/cysteine 136, cysteine 141/cysteine 146, cysteine 183/cysteine 193, and cysteine 218/cysteine 257. Asparagine 142 is a glycosylation site (N-linked (GlcNAc...) asparagine; by host). A glycan (N-linked (GlcNAc...) asparagine; by host) is linked at asparagine 357. Cystine bridges form between cysteine 386-cysteine 445, cysteine 390-cysteine 399, cysteine 415-cysteine 434, and cysteine 462-cysteine 485. A glycan (N-linked (GlcNAc...) asparagine; by host) is linked at asparagine 409. The helical transmembrane segment at 497-517 (LLLTFCFGWVLIPTITMILLK) threads the bilayer. The Cytoplasmic segment spans residues 518–637 (ILIAFAYLCS…LSLFRYRSRF (120 aa)). A binding to the ribonucleoprotein region spans residues 526-543 (CSKYNTDSKFRILVEKVK). 2 consecutive CCHC-type zinc fingers follow at residues 555 to 575 (CEVCQYECETAKELESHRKSC) and 580 to 601 (CPYCLNPSEATPSALQAHFKVC). 2 binding to the ribonucleoprotein regions span residues 598–615 (FKVCKLTSRFQENLKKSL) and 621–635 (MQGCYRTLSLFRYRS). Positions 621-644 (MQGCYRTLSLFRYRSRFFVGLVWC) constitute an ITAM domain. Residues 625 to 628 (YRTL) carry the YxxL motif. A helical membrane pass occupies residues 638 to 658 (FVGLVWCMLLVLELIVWAASA). The Lumenal segment spans residues 659-1115 (ETQNLNDGWT…WVLGVLNGNW (457 aa)). 8 cysteine pairs are disulfide-bonded: cysteine 745-cysteine 780, cysteine 749-cysteine 787, cysteine 761-cysteine 894, cysteine 775-cysteine 905, cysteine 790-cysteine 913, cysteine 816-cysteine 825, cysteine 833-cysteine 842, and cysteine 873-cysteine 877. The fusion loop stretch occupies residues 767-787 (YEYETGWGCNPPDCPGVGTGC). N-linked (GlcNAc...) asparagine; by host glycosylation is present at asparagine 937. 5 cysteine pairs are disulfide-bonded: cysteine 979–cysteine 1009, cysteine 1002–cysteine 1054, cysteine 1019–cysteine 1024, cysteine 1055–cysteine 1060, and cysteine 1094–cysteine 1098. Residues 1116–1136 (MVVAVLIALLILSIFLFALCC) traverse the membrane as a helical segment. Positions 1131–1148 (LFALCCPRRPSYKKDHKP) are binding to the ribonucleoprotein. The Cytoplasmic segment spans residues 1137 to 1148 (PRRPSYKKDHKP).

Belongs to the hantavirus envelope glycoprotein family. Homodimer. Homotetramer; forms heterotetrameric Gn-Gc spikes in the pre-fusion conformation. Interacts (via C-terminus) with the nucleoprotein. Interacts with host TUFM; this interaction contributes to the virus-induced degradation of mitochondria by autophagy, which leads to degradation of host MAVS and inhibition of type I interferon (IFN) responses. Interacts with host MAP1LC3B; this interaction contributes to the virus-induced degradation of mitochondria by autophagy, which leads to degradation of host MAVS and inhibition of type I interferon (IFN) responses. As to quaternary structure, homodimer. Homotetramer; forms heterotetrameric Gn-Gc spikes in the pre-fusion conformation. Homotrimer; forms homotrimer in the post-fusion conformation at acidic pH. Interacts (via C-terminus) with the nucleoprotein. Envelope polyprotein precursor is quickly cleaved in vivo just after synthesis, presumably by host signal peptidase.

The protein resides in the virion membrane. It localises to the host cell surface. It is found in the host Golgi apparatus membrane. The protein localises to the host endoplasmic reticulum membrane. Its subcellular location is the host mitochondrion. Forms homotetramers with glycoprotein C at the surface of the virion. Attaches the virion to host cell receptors including integrin ITGAV/ITGB3. This attachment induces virion internalization predominantly through clathrin-dependent endocytosis. Mediates the assembly and budding of infectious virus particles through its interaction with the nucleocapsid protein and the viral genome. May dysregulate normal immune and endothelial cell responses through an ITAM motif. Translocates to mitochondria, binds to host TUFM and recruits MAP1LC3B. These interactions induce mitochondrial autophagy and therefore destruction of host MAVS leading to inhibition of type I interferon (IFN) responses. Concomitant breakdown of glycoprotein N is apparently prevented by the nucleoprotein that may inhibit Gn-stimulated autophagosome-lysosome fusion. Interacts with the viral genomic RNA. Its function is as follows. Forms heterooctamers with glycoprotein N at the surface of the virion. Attaches the virion to host cell receptors including integrin ITGAV/ITGB3. This attachment induces virion internalization predominantly through clathrin-dependent endocytosis. Class II fusion protein that promotes fusion of viral membrane with host endosomal membrane after endocytosis of the virion. In Homo sapiens (Human), this protein is Envelopment polyprotein (GP).